Reading from the N-terminus, the 253-residue chain is Acidic endochitinase Q (253 aa).

A signal peptide spans Met-1–Ala-24. The active-site Proton donor is the Glu-92. A disulfide bond links Cys-212 and Cys-244.

Belongs to the glycosyl hydrolase 19 family. Chitinase class I subfamily.

The protein localises to the secreted. It catalyses the reaction Random endo-hydrolysis of N-acetyl-beta-D-glucosaminide (1-&gt;4)-beta-linkages in chitin and chitodextrins.. In terms of biological role, defense against chitin-containing fungal pathogens. The polypeptide is Acidic endochitinase Q (Nicotiana tabacum (Common tobacco)).